Consider the following 245-residue polypeptide: Protein mlo1 (245 aa).

Residues 4–38 (YKSLKVAELREKLAEKGLSTAGNKAELVSRLTAAT) form the SAP domain. Residues 32–245 (SRLTAATESN…AERFGVAAKN (214 aa)) are disordered. The span at 37–52 (ATESNDENTSNNNATD) shows a compositional bias: low complexity. Residues 58–70 (PPEDDIDWGDMEN) are compositionally biased toward acidic residues. The span at 109–118 (TSQAPETSTG) shows a compositional bias: polar residues. Residues 119–130 (AEEHQETTEESK) are compositionally biased toward basic and acidic residues. Position 139 is a phosphoserine (serine 139). Residues 182–196 (SSNNKNHNQSKNPQN) show a composition bias toward low complexity.

This sequence belongs to the SAP domain-containing ribonucleoprotein family.

This Schizosaccharomyces pombe (strain 972 / ATCC 24843) (Fission yeast) protein is Protein mlo1 (mlo1).